The primary structure comprises 450 residues: MFS-type transporter avaK (450 aa).

The next 8 helical transmembrane spans lie at 18–38 (VMALNSLLILFTNFAIFLSMP), 100–120 (RVVCIYSDVLPLSLVWLSGLL), 148–168 (AVALLRLHSVFIVAKIFAAPA), 171–191 (ALVALTSAWTPFLISLAMLFV), 244–264 (APIIIVNLVASITKSSNHFLL), 280–300 (LVLVIREASSLLTYLVLMPAA), 329–349 (FGFFSIALAGTPVVYVLALAF), and 408–428 (GWLGIPYIAAGLFFITVLVAV).

It belongs to the major facilitator superfamily.

The protein localises to the membrane. It participates in secondary metabolite biosynthesis. MFS-type transporter; part of the cluster that mediates the biosynthesis of a highly modified cyclo-arginine-tryptophan dipeptide (cRW). This is MFS-type transporter avaK from Aspergillus versicolor.